We begin with the raw amino-acid sequence, 114 residues long: Endoribonuclease MazF2 (114 aa).

Belongs to the PemK/MazF family. In terms of assembly, probably forms a complex with cognate antitoxin MazE2.

Its function is as follows. Toxic component of a type II toxin-antitoxin (TA) system. Acts as an endoribonuclease on single-strand RNA, cleaving between the second and third bases in the sequences CUCCU and UUCCU. Neutralized by coexpression with cognate antitoxin MazE2. In Mycobacterium bovis (strain ATCC BAA-935 / AF2122/97), this protein is Endoribonuclease MazF2 (mazF2).